Reading from the N-terminus, the 105-residue chain is uncharacterized protein (105 aa).

Residues 1 to 24 form the signal peptide; sequence MYWPCLVITPFTVGESFCLLLSLG.

This is an uncharacterized protein from Saccharomyces cerevisiae (strain ATCC 204508 / S288c) (Baker's yeast).